The chain runs to 161 residues: Cytochrome c-type biogenesis protein CcmE (161 aa).

The Cytoplasmic portion of the chain corresponds to 1–8; that stretch reads MNPRRKKR. The helical; Signal-anchor for type II membrane protein transmembrane segment at 9–29 threads the bilayer; sequence LGIVLAIFIGISATIGLMLYA. At 30-161 the chain is on the periplasmic side; it reads LNQNMDLFYT…SSEQKQGSGE (132 aa). H129 and Y133 together coordinate heme. A disordered region spans residues 142–161; sequence MKKTHEPLQYSSEQKQGSGE. A compositionally biased stretch (polar residues) spans 150–161; that stretch reads QYSSEQKQGSGE.

The protein belongs to the CcmE/CycJ family.

It is found in the cell inner membrane. Heme chaperone required for the biogenesis of c-type cytochromes. Transiently binds heme delivered by CcmC and transfers the heme to apo-cytochromes in a process facilitated by CcmF and CcmH. This is Cytochrome c-type biogenesis protein CcmE from Vibrio parahaemolyticus serotype O3:K6 (strain RIMD 2210633).